The sequence spans 345 residues: Phosphate acyltransferase (345 aa).

This sequence belongs to the PlsX family. In terms of assembly, homodimer. Probably interacts with PlsY.

The protein resides in the cytoplasm. It catalyses the reaction a fatty acyl-[ACP] + phosphate = an acyl phosphate + holo-[ACP]. The protein operates within lipid metabolism; phospholipid metabolism. Catalyzes the reversible formation of acyl-phosphate (acyl-PO(4)) from acyl-[acyl-carrier-protein] (acyl-ACP). This enzyme utilizes acyl-ACP as fatty acyl donor, but not acyl-CoA. This chain is Phosphate acyltransferase, found in Wolbachia pipientis wMel.